The primary structure comprises 555 residues: uncharacterized protein (555 aa).

An N-terminal signal peptide occupies residues 1-28; that stretch reads MRSGLFGVLRWTAVGLVATLVASLALTA. The N-palmitoyl cysteine moiety is linked to residue Cys29. Cys29 is lipidated: S-diacylglycerol cysteine.

It to M.tuberculosis Rv2585c and M.bovis Mb2616c.

Its subcellular location is the cell membrane. This is an uncharacterized protein from Mycobacterium leprae (strain TN).